The primary structure comprises 421 residues: MLDIKRIRNNPEEIVEALKKRRGEYPIQKLLATDEKRREVIQKVESMKAEQNKLSKQVPQMKKNGEDTTELFKNLKKLSDDIKNLDDDLKDIDDEIREYLMEIPNTPNKDVPVGLDDTENLEMRKWGEPRKFDFDIKAHWDLGVDLDILDFERATKISKSRFSVFKGKGARLERALMNFMVDLHTDKQGYTEMNTPVLMSPSAMMGTGQIPKFKEDMFYCEKDDMYLAPTAEVPVTNLLGGEILEQGSLPIYYTAFTQCFRREAGSAGRDTRGLIRNHQFEKVEMVKFVEPSTSYDELEKLTNNAEEILQLLEIPYRVVRLCSGDLGFSSAMTYDIEVWMPSYNRYVEISSCSNFEDFQARRANIRYRDENNKPQYVHTLNGSGLAIGRCFAAVIENYQQADGSIKIPEVLQKYTGFDIID.

230–232 (TAE) is an L-serine binding site. Residue 261-263 (RRE) participates in ATP binding. Glu284 contributes to the L-serine binding site. Residue 348 to 351 (EISS) coordinates ATP. Ser383 provides a ligand contact to L-serine.

This sequence belongs to the class-II aminoacyl-tRNA synthetase family. Type-1 seryl-tRNA synthetase subfamily. In terms of assembly, homodimer. The tRNA molecule binds across the dimer.

Its subcellular location is the cytoplasm. It carries out the reaction tRNA(Ser) + L-serine + ATP = L-seryl-tRNA(Ser) + AMP + diphosphate + H(+). The catalysed reaction is tRNA(Sec) + L-serine + ATP = L-seryl-tRNA(Sec) + AMP + diphosphate + H(+). It participates in aminoacyl-tRNA biosynthesis; selenocysteinyl-tRNA(Sec) biosynthesis; L-seryl-tRNA(Sec) from L-serine and tRNA(Sec): step 1/1. Its function is as follows. Catalyzes the attachment of serine to tRNA(Ser). Is also able to aminoacylate tRNA(Sec) with serine, to form the misacylated tRNA L-seryl-tRNA(Sec), which will be further converted into selenocysteinyl-tRNA(Sec). This chain is Serine--tRNA ligase, found in Finegoldia magna (strain ATCC 29328 / DSM 20472 / WAL 2508) (Peptostreptococcus magnus).